The sequence spans 457 residues: Putative zinc finger CCCH domain-containing protein 21 (457 aa).

Disordered regions lie at residues 51 to 73 (PTSS…ARAS), 102 to 130 (LESP…EKLL), 195 to 221 (TSPS…ERER), and 280 to 329 (RKQA…RLRV). Residues 57–66 (DGGGGGGGGY) are compositionally biased toward gly residues. Residues 215–276 (ASAEREREVR…HLSLLLEELE (62 aa)) are a coiled coil. C3H1-type zinc fingers lie at residues 382–409 (AAKT…HGLQ) and 419–447 (RYKT…HSPL).

In Oryza sativa subsp. japonica (Rice), this protein is Putative zinc finger CCCH domain-containing protein 21.